A 358-amino-acid chain; its full sequence is Peptide chain release factor 1 (358 aa).

Q233 bears the N5-methylglutamine mark.

Belongs to the prokaryotic/mitochondrial release factor family. Methylated by PrmC. Methylation increases the termination efficiency of RF1.

Its subcellular location is the cytoplasm. Functionally, peptide chain release factor 1 directs the termination of translation in response to the peptide chain termination codons UAG and UAA. The chain is Peptide chain release factor 1 from Lachnoclostridium phytofermentans (strain ATCC 700394 / DSM 18823 / ISDg) (Clostridium phytofermentans).